The following is a 220-amino-acid chain: 1-Cys peroxiredoxin B (220 aa).

Residues Leu-4 to Thr-165 enclose the Thioredoxin domain. The Cysteine sulfenic acid (-SOH) intermediate role is filled by Cys-46. The Bipartite nuclear localization signal motif lies at Lys-195–Gln-218.

Belongs to the peroxiredoxin family. Prx6 subfamily.

The protein localises to the nucleus. Its subcellular location is the cytoplasm. The catalysed reaction is a hydroperoxide + [thioredoxin]-dithiol = an alcohol + [thioredoxin]-disulfide + H2O. Its function is as follows. Thiol-specific peroxidase that catalyzes the reduction of hydrogen peroxide and organic hydroperoxides to water and alcohols, respectively. Seems to contribute to the inhibition of germination during stress. The chain is 1-Cys peroxiredoxin B from Oryza sativa subsp. japonica (Rice).